We begin with the raw amino-acid sequence, 292 residues long: Tetratricopeptide repeat protein 1 (292 aa).

The segment at 23–125 (TQEAECAGPP…STRLKEEGNE (103 aa)) is disordered. Composition is skewed to basic and acidic residues over residues 45–55 (LLRDDEAHLQE) and 75–85 (GADKVENKSNE). Phosphoserine is present on residues Ser83 and Ser90. Residues 99–125 (ELEKNMSDEEKQKRREESTRLKEEGNE) show a composition bias toward basic and acidic residues. TPR repeat units follow at residues 116–149 (STRLKEEGNEQFKKGDYIEAESSYSRALEMCPSC), 155–188 (SILFSNRAAARMKQDKKEMAINDCSKAIQLNPSY), and 189–222 (IRAILRRAELYEKTDKLDEALEDYKSILEKDPSI).

In terms of assembly, interacts with the GAP domain of NF1. Interacts (via TPR repeats) with HSP90AA1 and HSPA8.

This chain is Tetratricopeptide repeat protein 1 (TTC1), found in Homo sapiens (Human).